Here is a 579-residue protein sequence, read N- to C-terminus: MNAIVALCHFCELHGPRTLFCTEVLHAPLPQGAGSGDSPDQVEQAEEEEGGIQMSSRVRAHSPAEGASSESSSPGPKKSDMCEGCRSLAVGHPGYISHDKETSIKYVSHQHPNHPQLFSIVRQACVRSLSCEVCPGREGPIFFGDEQHGFVFSHTFFIKDSLARGFQRWYSIIAIMMDRIYLINSWPFLLGRIRGIISELQAKAFKVFEAEQFGCPQRAQRMNTAFTPFLHQRNGNAARSLTSLTSDDNLWACLHTSFAWLLKACGSRLTEKLLEGAPTEDTLVQMEKLADLEEESESWDNSEAEEEEKAPVTPEGAEGRELTSCPTESSFLSACGSWQPPKLTGFKSLRHMRQVLGAPSFRMLAWHVLMGNQVIWKSRDVNLVHSAFEVLRTMLPVGCVRIIPYSSQYEEAYRCNFLGLSPPVPIPAHVLASEFVVVVEVHTATRSNLHPAGCEDDQSLSKYEFVVTSGSPVAADRVGPTILNKIEAALTNQNLSVDVVDQCLICLKEEWMNKVKVLFKFTKVDSRPKEDTQKLLSVLGASEEDNVKLLKFWMTGLSKTYKSHLMSTVRSPTATESRS.

The tract at residues 31–82 is disordered; that stretch reads QGAGSGDSPDQVEQAEEEEGGIQMSSRVRAHSPAEGASSESSSPGPKKSDMC. Phosphoserine occurs at positions 62 and 73. Low complexity predominate over residues 63–76; it reads PAEGASSESSSPGP. The region spanning 86–242 is the uDENN FLCN/SMCR8-type domain; sequence RSLAVGHPGY…RNGNAARSLT (157 aa). Residues 287 to 310 adopt a coiled-coil conformation; sequence EKLADLEEESESWDNSEAEEEEKA. Over residues 294–308 the composition is skewed to acidic residues; sequence EESESWDNSEAEEEE. The interval 294-323 is disordered; that stretch reads EESESWDNSEAEEEEKAPVTPEGAEGRELT. Residues Ser302, Ser406, Ser537, Ser542, and Ser571 each carry the phosphoserine modification. The 153-residue stretch at 339 to 491 folds into the cDENN FLCN/SMCR8-type domain; the sequence is QPPKLTGFKS…ILNKIEAALT (153 aa). Positions 493–558 constitute a dDENN FLCN/SMCR8-type domain; that stretch reads QNLSVDVVDQ…LLKFWMTGLS (66 aa).

This sequence belongs to the folliculin family. As to quaternary structure, interacts (via C-terminus) with FNIP1 or FNIP2 (via C-terminus). Component of the lysosomal folliculin complex (LFC), composed of FLCN, FNIP1 (or FNIP2), RagA/RRAGA or RagB/RRAGB GDP-bound, RagC/RRAGC or RagD/RRAGD GTP-bound, and Ragulator. Interaction with FNIP1 or FNIP2 mediates indirect interaction with the PRKAA1, PRKAB1 and PRKAG1 subunits of 5'-AMP-activated protein kinase (AMPK). Interacts with HSP90AA1 in the presence of FNIP1. Interacts with HSP70, STUB1, CDC37, AHSA1, CCT2, STIP1, PTGES3 and PPP5C. Interacts with GABARAP; interaction takes place in the presence of FNIP1 and/or FNIP2. Interacts with RILP; the interaction is direct and promotes association between RILP and RAB34. Interacts with KIF3A and KIF3B. Interacts with lactate dehydrogenase LDHA, but not LDHB; the interaction is direct, may preferentially bind LDHA dimers rather than tetramers, and regulates LDHA activity, acting as an uncompetitive inhibitor. Post-translationally, phosphorylation by ULK1 modulates the interaction with GABARAP and is required to regulate autophagy. Highly expressed in adult heart, pancreas, and prostate with moderate expression in adult brain, kidney, liver, adipose tissue and lung.

Its subcellular location is the lysosome membrane. It is found in the cytoplasm. The protein resides in the cytosol. The protein localises to the cell projection. It localises to the cilium. Its subcellular location is the cytoskeleton. It is found in the microtubule organizing center. The protein resides in the centrosome. The protein localises to the spindle. It localises to the nucleus. With respect to regulation, GTPase-activating activity is inhibited in the folliculin complex (LFC), which stabilizes the GDP-bound state of RagA/RRAGA (or RagB/RRAGB), because Arg-164 is located far from the RagC/RRAGC or RagD/RRAGD nucleotide pocket. Disassembly of the LFC complex upon amino acid restimulation liberates the GTPase-activating activity. Its function is as follows. Multi-functional protein, involved in both the cellular response to amino acid availability and in the regulation of glycolysis. GTPase-activating protein that plays a key role in the cellular response to amino acid availability through regulation of the non-canonical mTORC1 signaling cascade controlling the MiT/TFE factors TFEB and TFE3. Activates mTORC1 by acting as a GTPase-activating protein: specifically stimulates GTP hydrolysis by RagC/RRAGC or RagD/RRAGD, promoting the conversion to the GDP-bound state of RagC/RRAGC or RagD/RRAGD, and thereby activating the kinase activity of mTORC1. The GTPase-activating activity is inhibited during starvation and activated in presence of nutrients. Acts as a key component for non-canonical mTORC1-dependent control of the MiT/TFE factors TFEB and TFE3, while it is not involved in mTORC1-dependent phosphorylation of canonical RPS6KB1/S6K1 and EIF4EBP1/4E-BP1. In low-amino acid conditions, the lysosomal folliculin complex (LFC) is formed on the membrane of lysosomes, which inhibits the GTPase-activating activity of FLCN, inactivates mTORC1 and maximizes nuclear translocation of TFEB and TFE3. Upon amino acid restimulation, RagA/RRAGA (or RagB/RRAGB) nucleotide exchange promotes disassembly of the LFC complex and liberates the GTPase-activating activity of FLCN, leading to activation of mTORC1 and subsequent cytoplasmic retention of TFEB and TFE3. Indirectly acts as a positive regulator of Wnt signaling by promoting mTOR-dependent cytoplasmic retention of MiT/TFE factor TFE3. Required for the exit of hematopoietic stem cell from pluripotency by promoting mTOR-dependent cytoplasmic retention of TFE3, thereby increasing Wnt signaling. Involved in the control of embryonic stem cells differentiation; together with LAMTOR1 it is necessary to recruit and activate RagC/RRAGC and RagD/RRAGD at the lysosomes, and to induce exit of embryonic stem cells from pluripotency via non-canonical, mTOR-independent TFE3 inactivation. Acts as an inhibitor of browning of adipose tissue by regulating mTOR-dependent cytoplasmic retention of TFE3. In response to flow stress, regulates STK11/LKB1 accumulation and mTORC1 activation through primary cilia: may act by recruiting STK11/LKB1 to primary cilia for activation of AMPK resided at basal bodies, causing mTORC1 down-regulation. Together with FNIP1 and/or FNIP2, regulates autophagy: following phosphorylation by ULK1, interacts with GABARAP and promotes autophagy. Required for starvation-induced perinuclear clustering of lysosomes by promoting association of RILP with its effector RAB34. Regulates glycolysis by binding to lactate dehydrogenase LDHA, acting as an uncompetitive inhibitor. This Mus musculus (Mouse) protein is Folliculin.